The chain runs to 121 residues: Putative iron-sulfur cluster insertion protein ErpA (121 aa).

Positions 49, 113, and 115 each coordinate iron-sulfur cluster.

This sequence belongs to the HesB/IscA family. As to quaternary structure, homodimer. The cofactor is iron-sulfur cluster.

Required for insertion of 4Fe-4S clusters. The sequence is that of Putative iron-sulfur cluster insertion protein ErpA from Methylibium petroleiphilum (strain ATCC BAA-1232 / LMG 22953 / PM1).